A 347-amino-acid chain; its full sequence is Two pore potassium channel a (347 aa).

The span at 1 to 11 shows a compositional bias: polar residues; the sequence is MDDNSIQQSLL. Residues 1-49 form a disordered region; the sequence is MDDNSIQQSLLADNPNVLQRKPSEGVNRFRRCRSTPSTDPLQGPPEKGS. The Cytoplasmic portion of the chain corresponds to 1–65; that stretch reads MDDNSIQQSL…LFKEMRPSFR (65 aa). A helical membrane pass occupies residues 66 to 86; the sequence is LVGLLLFIYLLVGVLAFYAVM. The pore-forming intramembrane region spans 99–118; the sequence is DALYFCVVTMTTVGYGDLVP. The chain crosses the membrane as a helical span at residues 125 to 145; sequence LLACAFVFMGMAVVALFVSKV. Residues 146–183 lie on the Cytoplasmic side of the membrane; it reads ADYLVEKQEVLFFKALHTNLKGGETKMLRAIETNRIKY. The chain crosses the membrane as a helical span at residues 184-204; the sequence is KFYTNALLLVLSIISGTVFLW. The pore-forming intramembrane region spans 213-232; it reads DSFYCVCATITTLGYGDKSF. A helical transmembrane segment spans residues 239–259; the sequence is VFAVFWIITSTIIMAQFFMYL. Residues 260-347 lie on the Cytoplasmic side of the membrane; it reads AEIYTERRQK…YDLTLAQSAQ (88 aa). 2 consecutive EF-hand domains span residues 276–311 and 315–347; these read LTRKMTKMDLEAADLDDDRQVGAAEFVVYKLKELGK and EEISSFLEEFEKLDVDHSGTLSPYDLTLAQSAQ. Ca(2+)-binding residues include D289, D291, D293, Q295, E300, D328, D330, S332, T334, and D339.

This sequence belongs to the two pore domain potassium channel (TC 1.A.1.7) family. In terms of assembly, homodimer.

The protein localises to the vacuole membrane. In terms of biological role, highly selective inward-rectifying potassium channel that is specifically located in the tonoplast of large vacuoles. Functions independently of the voltage difference across the membrane. In Oryza sativa subsp. japonica (Rice), this protein is Two pore potassium channel a (TPKA).